Reading from the N-terminus, the 211-residue chain is Calaxin (211 aa).

3 consecutive EF-hand domains span residues 64 to 99, 100 to 135, and 145 to 180; these read TDDM…FLRG, SLEE…SLLK, and GIKD…ETLL. Ca(2+)-binding residues include aspartate 77, aspartate 79, aspartate 81, cysteine 83, glutamate 88, aspartate 113, asparagine 115, aspartate 117, glutamate 124, aspartate 158, aspartate 160, aspartate 162, lysine 164, and aspartate 169.

As to quaternary structure, component of the outer dynein arm-docking complex along with ODAD1, ODAD2, ODAD3 and ODAD4. Strong expression in the respiratory epithelium. Expressed in the sperm.

The protein resides in the cytoplasm. It is found in the cytoskeleton. It localises to the cilium axoneme. The protein localises to the cell projection. Its subcellular location is the cilium. The protein resides in the flagellum. Component of the outer dynein arm-docking complex (ODA-DC) that mediates outer dynein arms (ODA) binding onto the doublet microtubule. Seems to regulate the assembly of both ODAs and their axonemal docking complex onto ciliary microtubules. Regulates ciliary and flagellar motility and is required for cilia-driven determination of body laterality. The polypeptide is Calaxin (Homo sapiens (Human)).